Reading from the N-terminus, the 234-residue chain is Iron-sulfur cluster co-chaperone protein HscB (234 aa).

4 residues coordinate a divalent metal cation: cysteine 40, cysteine 43, cysteine 57, and cysteine 60. Residues 71 to 143 (DYFSLMNCNR…LTRGLYLLKL (73 aa)) form the J domain.

This sequence belongs to the HscB family. In terms of assembly, interacts with ISCU and HSPA9 to form an iron-sulfur transfer complex. Interacts with SDHAF1 (via the first LYR motif); the interaction recruits the iron-sulfur transfer complex composed of HSC20, HSPA9 and ISCU and mediates the incorporation of iron-sulfur clusters into SDHB which also interacts with HSC20. Interacts with the cytoplasmic form of ISCU and with CIA complex member CIAO1 (via LYR motif). Homodimer. Interacts with ISCU (cytoplasmic form); this interaction stabilizes the (Fe-S) clusters on ISCU. Interacts with the CIA complex member CIAO1 (via LYR motif).

The protein localises to the cytoplasm. It is found in the mitochondrion. Its pathway is cofactor biosynthesis; iron-sulfur cluster biosynthesis. Its function is as follows. Acts as a co-chaperone in iron-sulfur cluster assembly in mitochondria. Required for incorporation of iron-sulfur clusters into SDHB, the iron-sulfur protein subunit of succinate dehydrogenase that is involved in complex II of the mitochondrial electron transport chain. Recruited to SDHB by interaction with SDHAF1 which first binds SDHB and then recruits the iron-sulfur transfer complex formed by HSC20, HSPA9 and ISCU through direct binding to HSC20. Plays an essential role in hematopoiesis. Acts as a co-chaperone in iron-sulfur cluster assembly in the cytoplasm. Also mediates complex formation between components of the cytosolic iron-sulfur biogenesis pathway and the CIA targeting complex composed of CIAO1, DIPK1B/FAM69B and MMS19 by binding directly to the scaffold protein ISCU and to CIAO1. This facilitates iron-sulfur cluster insertion into a number of cytoplasmic and nuclear proteins including POLD1, ELP3, DPYD and PPAT. The chain is Iron-sulfur cluster co-chaperone protein HscB from Mus musculus (Mouse).